The primary structure comprises 204 residues: Protein DESIGUAL 4 (204 aa).

Transmembrane regions (helical) follow at residues 13–33, 60–80, 107–127, and 143–163; these read IITVIIVCIVLTVGLDIVAGF, FVLGIIAVSCLATAHVSANVI, CLFLIWVVGIFGALILANGIW, and VFSIGGKVCFLHAIVSGIYYI. Positions 177–204 are disordered; sequence KPNKTKPSELKPIPTEPNEAEPNSTPNP. Residue asparagine 179 is glycosylated (N-linked (GlcNAc...) asparagine).

It belongs to the DESIGUAL family. As to expression, only expressed in inflorescences.

It is found in the endoplasmic reticulum membrane. The sequence is that of Protein DESIGUAL 4 from Arabidopsis thaliana (Mouse-ear cress).